A 615-amino-acid polypeptide reads, in one-letter code: UvrABC system protein C (615 aa).

The GIY-YIG domain maps to 12-91; sequence EKPGVYIMKD…IKKYKPKYNV (80 aa). The 36-residue stretch at 203-238 folds into the UVR domain; sequence DWLIQKLKEDMKKAAEELRFEEAARIRDQIFAIERT.

The protein belongs to the UvrC family. As to quaternary structure, interacts with UvrB in an incision complex.

Its subcellular location is the cytoplasm. The UvrABC repair system catalyzes the recognition and processing of DNA lesions. UvrC both incises the 5' and 3' sides of the lesion. The N-terminal half is responsible for the 3' incision and the C-terminal half is responsible for the 5' incision. This chain is UvrABC system protein C, found in Thermoanaerobacter pseudethanolicus (strain ATCC 33223 / 39E) (Clostridium thermohydrosulfuricum).